Reading from the N-terminus, the 74-residue chain is Homeobox protein H40 (74 aa).

Residues 8–67 (ARRARTAFTYEQLVALENKFKTTRYLSVCERLNLALSLSLTETQVKIWFQNRRTKWKKQN) constitute a DNA-binding region (homeobox).

It is found in the nucleus. The chain is Homeobox protein H40 from Apis mellifera (Honeybee).